The chain runs to 340 residues: Alcohol dehydrogenase (340 aa).

Residues Cys37, His58, Cys89, Cys92, Cys95, Cys103, and Cys145 each coordinate Zn(2+).

Belongs to the zinc-containing alcohol dehydrogenase family. Zn(2+) serves as cofactor.

The catalysed reaction is a primary alcohol + NAD(+) = an aldehyde + NADH + H(+). The enzyme catalyses a secondary alcohol + NAD(+) = a ketone + NADH + H(+). The polypeptide is Alcohol dehydrogenase (adh) (Staphylococcus epidermidis (strain ATCC 12228 / FDA PCI 1200)).